The primary structure comprises 198 residues: Penicillin-binding protein activator LpoB (198 aa).

The first 20 residues, 1–20 (MSWIRIRRSGVLLLALVLSG), serve as a signal peptide directing secretion. C21 carries N-palmitoyl cysteine lipidation. C21 carries S-diacylglycerol cysteine lipidation. The segment at 28 to 62 (PQPAAPVEPVTPPVNVPQPPKAEPGQNVPPPPKMQ) is disordered. Positions 30-61 (PAAPVEPVTPPVNVPQPPKAEPGQNVPPPPKM) are enriched in pro residues.

This sequence belongs to the LpoB family. Interacts with PBP1b.

The protein localises to the cell outer membrane. In terms of biological role, regulator of peptidoglycan synthesis that is essential for the function of penicillin-binding protein 1B (PBP1b). The protein is Penicillin-binding protein activator LpoB of Erwinia amylovora (strain CFBP1430).